The following is a 205-amino-acid chain: Guanylate kinase (205 aa).

Positions 5 to 183 (GTLYTVSAPS…ALTEFRSIVV (179 aa)) constitute a Guanylate kinase-like domain. Residue 12-19 (APSGAGKT) participates in ATP binding.

The protein belongs to the guanylate kinase family.

It is found in the cytoplasm. It carries out the reaction GMP + ATP = GDP + ADP. Its function is as follows. Essential for recycling GMP and indirectly, cGMP. The sequence is that of Guanylate kinase from Saccharophagus degradans (strain 2-40 / ATCC 43961 / DSM 17024).